A 481-amino-acid polypeptide reads, in one-letter code: Uridine 5'-monophosphate synthase (481 aa).

The segment at 1 to 214 is OPRTase; that stretch reads MEVASQALGP…VFSAANHNGL (214 aa). Residue Tyr37 is modified to Phosphotyrosine. The tract at residues 215 to 220 is domain linker; the sequence is PPPEKK. An OMPdecase region spans residues 221 to 481; it reads ACKELSFGAR…EAYLSRLAVQ (261 aa). Ser257 lines the orotidine 5'-phosphate pocket. Residues Ser257, Asp259, and 281–283 contribute to the UMP site; that span reads KTH. Orotidine 5'-phosphate contacts are provided by residues Lys281, Lys314, Asp317, Thr321, Ser372, 430 to 432, and 450 to 451; these read QQY and GR. Residues Lys314 and Asp317 each act as for OMPdecase activity in the active site. Residues Asp317, Thr321, Ser372, 430–432, and 450–451 each bind UMP; these read QQY and GR.

The protein in the N-terminal section; belongs to the purine/pyrimidine phosphoribosyltransferase family. In the C-terminal section; belongs to the OMP decarboxylase family. In terms of assembly, homodimer; dimerization is required for enzymatic activity.

The enzyme catalyses orotidine 5'-phosphate + diphosphate = orotate + 5-phospho-alpha-D-ribose 1-diphosphate. It catalyses the reaction orotidine 5'-phosphate + H(+) = UMP + CO2. It functions in the pathway pyrimidine metabolism; UMP biosynthesis via de novo pathway; UMP from orotate: step 1/2. The protein operates within pyrimidine metabolism; UMP biosynthesis via de novo pathway; UMP from orotate: step 2/2. Its function is as follows. Bifunctional enzyme catalyzing the last two steps of de novo pyrimidine biosynthesis, orotate phosphoribosyltransferase (OPRT), which converts orotate to orotidine-5'-monophosphate (OMP), and orotidine-5'-monophosphate decarboxylase (ODC), the terminal enzymatic reaction that decarboxylates OMP to uridine monophosphate (UMP). This chain is Uridine 5'-monophosphate synthase (Umps), found in Mus musculus (Mouse).